The following is a 132-amino-acid chain: Homeobox protein HD-4 (132 aa).

Positions 29–88 (GLSGYRYKTHIQVYVLTKIFEITQYPSHDTRQNLAILLNMSPRTIQIWFQNSRSVSRGAA) form a DNA-binding region, homeobox. The disordered stretch occupies residues 82 to 101 (SVSRGAAKKKVSKDNGPQEA).

It localises to the nucleus. This Encephalitozoon cuniculi (strain GB-M1) (Microsporidian parasite) protein is Homeobox protein HD-4 (HD-4).